The following is an 82-amino-acid chain: U16-lycotoxin-Ls1b (82 aa).

A signal peptide spans 1 to 22 (MSPKVQALLLLVGLITFLEVHA). Positions 23–34 (EEELSETVESER) are excised as a propeptide. 4 disulfides stabilise this stretch: C36–C51, C43–C56, C50–C67, and C58–C65.

It belongs to the neurotoxin 02 (plectoxin) family. 04 (U16-lycotoxin) subfamily. In terms of tissue distribution, expressed by the venom gland.

The protein resides in the secreted. This Lycosa singoriensis (Wolf spider) protein is U16-lycotoxin-Ls1b.